Reading from the N-terminus, the 443-residue chain is ATP-dependent protease ATPase subunit HslU (443 aa).

Residues I18 and 60–65 (GVGKTE) contribute to the ATP site. The segment at 142–162 (LGFEASPSEESNATRQKFRKK) is disordered. Positions 256, 321, and 393 each coordinate ATP.

It belongs to the ClpX chaperone family. HslU subfamily. As to quaternary structure, a double ring-shaped homohexamer of HslV is capped on each side by a ring-shaped HslU homohexamer. The assembly of the HslU/HslV complex is dependent on binding of ATP.

The protein localises to the cytoplasm. In terms of biological role, ATPase subunit of a proteasome-like degradation complex; this subunit has chaperone activity. The binding of ATP and its subsequent hydrolysis by HslU are essential for unfolding of protein substrates subsequently hydrolyzed by HslV. HslU recognizes the N-terminal part of its protein substrates and unfolds these before they are guided to HslV for hydrolysis. The protein is ATP-dependent protease ATPase subunit HslU of Nitrosomonas europaea (strain ATCC 19718 / CIP 103999 / KCTC 2705 / NBRC 14298).